Here is a 120-residue protein sequence, read N- to C-terminus: Succinate dehydrogenase membrane anchor subunit (120 aa).

The Mitochondrial matrix portion of the chain corresponds to 1–17; it reads MTEKLLHFIRTKSGSMH. A helical membrane pass occupies residues 18–38; sequence WWLQRFLAILLAPIILYLLFD. At 39 to 63 the chain is on the mitochondrial intermembrane side; sequence VAIYIGQQSDPTVMMFLNRIFNHNS. Residues 64–85 traverse the membrane as a helical segment; that stretch reads IFIFITSVILIWHVRGGMEVII. His76 is a heme binding site. At 86-95 the chain is on the mitochondrial matrix side; the sequence is EDYVHGEKTR. Tyr88 contacts a ubiquinone. A helical transmembrane segment spans residues 96-120; that stretch reads IVSIFLIRVIAIEIMEYLYKCSIIF.

In terms of assembly, part of an enzyme complex containing four subunits: a flavoprotein, an iron-sulfur protein, plus two membrane-anchoring proteins. The cofactor is heme.

The protein localises to the mitochondrion inner membrane. The protein operates within carbohydrate metabolism; tricarboxylic acid cycle. Functionally, membrane-anchoring subunit of succinate dehydrogenase (SDH). This is Succinate dehydrogenase membrane anchor subunit (SDH4) from Reclinomonas americana.